The sequence spans 512 residues: MGIKRETILILDFGGQYTQLIARRIREANVYCEIVPYDISPEEIKKIDPKGIVLSGGPASVYVKNAPKCDKEIFELGYPVLGICYGVQLMTELLGGKVAPAPVREYGKTEVVINNTIPLFKGIERDTIVWMSHTDQIELPPPDFKVVASTENCPIAAIANVEKKLYGVQFHPEVSHTHRGTEIIRNFLFEVCDCSADWTMDSLIEQTVKEVRAKVGNHKAVCALSGGVDSAVAAVLVDRAIHDQLVCIFVDTGLLRTNEGDMVIETFRKNYDMNIIRVDAKDRFLSRLKGVTDPEEKRKIIGNVFIEVFKEEAMKIGDVKFLVQGTLYPDVIESGHGISSTIKSHHNVGGLPEDIGFELIEPLRMLFKDEVRQVGKELGIPDEILYRQPFPGPGLAVRIVGEVTEEKLEILRLADSIVQREMKRFGWYNKVWQSFAILPGIKSVGVMGDERTYGYAIILRVVDSMDGMTADWTKLPYEILESISTSITNEVPGVNRVLYDITSKPPATIEWE.

Residues 7 to 197 (TILILDFGGQ…LFEVCDCSAD (191 aa)) enclose the Glutamine amidotransferase type-1 domain. Residue cysteine 84 is the Nucleophile of the active site. Active-site residues include histidine 171 and glutamate 173. The 190-residue stretch at 198 to 387 (WTMDSLIEQT…LGIPDEILYR (190 aa)) folds into the GMPS ATP-PPase domain. 225–231 (SGGVDSA) is an ATP binding site.

Homodimer.

The enzyme catalyses XMP + L-glutamine + ATP + H2O = GMP + L-glutamate + AMP + diphosphate + 2 H(+). It functions in the pathway purine metabolism; GMP biosynthesis; GMP from XMP (L-Gln route): step 1/1. Its function is as follows. Catalyzes the synthesis of GMP from XMP. The polypeptide is GMP synthase [glutamine-hydrolyzing] (Caldanaerobacter subterraneus subsp. tengcongensis (strain DSM 15242 / JCM 11007 / NBRC 100824 / MB4) (Thermoanaerobacter tengcongensis)).